Consider the following 215-residue polypeptide: Cytochrome b6 (215 aa).

A helical membrane pass occupies residues 32-52 (IFYCLGGITLTCFLIQFATGF). C35 contacts heme c. Residues H86 and H100 each coordinate heme b. 3 helical membrane passes run 90–110 (ASMM…TGGF), 116–136 (LTWV…VTGY), and 186–206 (LHTF…FLMI). Heme b-binding residues include H187 and H202.

This sequence belongs to the cytochrome b family. PetB subfamily. The 4 large subunits of the cytochrome b6-f complex are cytochrome b6, subunit IV (17 kDa polypeptide, PetD), cytochrome f and the Rieske protein, while the 4 small subunits are PetG, PetL, PetM and PetN. The complex functions as a dimer. Requires heme b as cofactor. The cofactor is heme c.

The protein resides in the cellular thylakoid membrane. Its function is as follows. Component of the cytochrome b6-f complex, which mediates electron transfer between photosystem II (PSII) and photosystem I (PSI), cyclic electron flow around PSI, and state transitions. This chain is Cytochrome b6, found in Synechococcus elongatus (strain ATCC 33912 / PCC 7942 / FACHB-805) (Anacystis nidulans R2).